The primary structure comprises 113 residues: Large ribosomal subunit protein uL22 (113 aa).

It belongs to the universal ribosomal protein uL22 family. As to quaternary structure, part of the 50S ribosomal subunit.

In terms of biological role, this protein binds specifically to 23S rRNA; its binding is stimulated by other ribosomal proteins, e.g. L4, L17, and L20. It is important during the early stages of 50S assembly. It makes multiple contacts with different domains of the 23S rRNA in the assembled 50S subunit and ribosome. The globular domain of the protein is located near the polypeptide exit tunnel on the outside of the subunit, while an extended beta-hairpin is found that lines the wall of the exit tunnel in the center of the 70S ribosome. This is Large ribosomal subunit protein uL22 from Stenotrophomonas maltophilia (strain K279a).